Reading from the N-terminus, the 204-residue chain is Recombination protein RecR (204 aa).

A C4-type zinc finger spans residues 61 to 76 (CACCNTFSETQVCSTC). The 100-residue stretch at 84-183 (SLLCIVETPA…KVTRIARGIP (100 aa)) folds into the Toprim domain.

The protein belongs to the RecR family.

Its function is as follows. May play a role in DNA repair. It seems to be involved in an RecBC-independent recombinational process of DNA repair. It may act with RecF and RecO. The sequence is that of Recombination protein RecR from Polynucleobacter necessarius subsp. necessarius (strain STIR1).